The following is a 1112-amino-acid chain: Phytochrome E (1112 aa).

Residues 1-20 (MGFESSSSAASNMKPQPQKS) are disordered. A GAF domain is found at 217-387 (DIGALCDTVV…AFGLQLQMEL (171 aa)). Cys-322 contributes to the phytochromobilin binding site. 2 consecutive PAS domains span residues 595–666 (FVCE…LQGE) and 732–803 (DYKT…LISL). In terms of domain architecture, Histidine kinase spans 877–1096 (YVRQEIKNPL…FFQVDLQVKT (220 aa)).

This sequence belongs to the phytochrome family. In terms of assembly, homodimer. Contains one covalently linked phytochromobilin chromophore.

Regulatory photoreceptor which exists in two forms that are reversibly interconvertible by light: the Pr form that absorbs maximally in the red region of the spectrum and the Pfr form that absorbs maximally in the far-red region. Photoconversion of Pr to Pfr induces an array of morphogenic responses, whereas reconversion of Pfr to Pr cancels the induction of those responses. Pfr controls the expression of a number of nuclear genes including those encoding the small subunit of ribulose-bisphosphate carboxylase, chlorophyll A/B binding protein, protochlorophyllide reductase, rRNA, etc. It also controls the expression of its own gene(s) in a negative feedback fashion. The protein is Phytochrome E (PHYE) of Arabidopsis thaliana (Mouse-ear cress).